We begin with the raw amino-acid sequence, 61 residues long: Protein YncO (61 aa).

The helical transmembrane segment at 18-38 threads the bilayer; sequence HVFLYVFYIFLFLVLFIMTIY.

Its subcellular location is the cell inner membrane. The sequence is that of Protein YncO from Escherichia coli (strain K12).